A 275-amino-acid polypeptide reads, in one-letter code: COP9 signalosome complex subunit 7a (275 aa).

N-acetylserine is present on Ser2. The 158-residue stretch at 2–159 (SAEVKVTGQN…QRLEVDYSIG (158 aa)) folds into the PCI domain. Residues 185 to 233 (LSGIEEQVSRANQHKEQQLGLKQQIESEVANLKKTIKVTTAAAAAATSQ) are a coiled coil. The interval 227–275 (AAAATSQDPEQHLTELREPAPGTNQRQPSKKASKGKGLRGSAKIWSKSN) is disordered. The span at 235-244 (PEQHLTELRE) shows a compositional bias: basic and acidic residues. Residues 254–263 (PSKKASKGKG) are compositionally biased toward basic residues.

This sequence belongs to the CSN7/EIF3M family. CSN7 subfamily. Component of the CSN complex, composed of COPS1/GPS1, COPS2, COPS3, COPS4, COPS5, COPS6, COPS7 (COPS7A or COPS7B), COPS8 and COPS9. In the complex, it probably interacts directly with COPS1, COPS2, COPS4, COPS5, COPS6 and COPS8. Interacts with PMF1. Interacts with the translation initiation factor EIF3S6. Interacts with CK2 and PKD. Interacts directly with ID3. In terms of processing, phosphorylated by CK2 and PKD kinases.

It localises to the cytoplasm. It is found in the nucleus. Functionally, component of the COP9 signalosome complex (CSN), a complex involved in various cellular and developmental processes. The CSN complex is an essential regulator of the ubiquitin (Ubl) conjugation pathway by mediating the deneddylation of the cullin subunits of SCF-type E3 ligase complexes, leading to decrease the Ubl ligase activity of SCF-type complexes such as SCF, CSA or DDB2. The complex is also involved in phosphorylation of p53/TP53, JUN, I-kappa-B-alpha/NFKBIA, ITPK1 and IRF8/ICSBP, possibly via its association with CK2 and PKD kinases. CSN-dependent phosphorylation of TP53 and JUN promotes and protects degradation by the Ubl system, respectively. This Pongo abelii (Sumatran orangutan) protein is COP9 signalosome complex subunit 7a (COPS7A).